The chain runs to 207 residues: N-(5'-phosphoribosyl)anthranilate isomerase (207 aa).

This sequence belongs to the TrpF family.

It catalyses the reaction N-(5-phospho-beta-D-ribosyl)anthranilate = 1-(2-carboxyphenylamino)-1-deoxy-D-ribulose 5-phosphate. Its pathway is amino-acid biosynthesis; L-tryptophan biosynthesis; L-tryptophan from chorismate: step 3/5. This chain is N-(5'-phosphoribosyl)anthranilate isomerase, found in Staphylococcus epidermidis (strain ATCC 35984 / DSM 28319 / BCRC 17069 / CCUG 31568 / BM 3577 / RP62A).